The following is a 562-amino-acid chain: Potassium-transporting ATPase potassium-binding subunit (562 aa).

12 helical membrane-spanning segments follow: residues 6–26 (FLLIASFMVVLFVLSRPLGGF), 63–83 (ALAILCFNLLGIVLLFVLLMA), 132–152 (GLTVQNFLSAATGIAVAFALI), 175–195 (LYVLLPIALIIALIFVSQGVL), 253–273 (FVQMLAIFLIPCALCFAFGQV), 283–303 (LIWAMSLIFIVAVVVVMYAEL), 327–347 (FGILATSLYAVVTTAASCGAV), 356–376 (ALGGMIPLWLMQIGEVVFGGV), 379–399 (GLYGMLLFVLLTVFIAGLMIG), 416–436 (MTALAILVTPTIVLLGTALAL), 483–503 (LLLAAAMFIGRFGVILPVLAI), and 526–546 (LFIGLLIGTVLLVGALTFIPA).

The protein belongs to the KdpA family. In terms of assembly, the system is composed of three essential subunits: KdpA, KdpB and KdpC.

It is found in the cell inner membrane. Functionally, part of the high-affinity ATP-driven potassium transport (or Kdp) system, which catalyzes the hydrolysis of ATP coupled with the electrogenic transport of potassium into the cytoplasm. This subunit binds the periplasmic potassium ions and delivers the ions to the membrane domain of KdpB through an intramembrane tunnel. The polypeptide is Potassium-transporting ATPase potassium-binding subunit (Yersinia pseudotuberculosis serotype O:1b (strain IP 31758)).